A 314-amino-acid polypeptide reads, in one-letter code: uncharacterized protein (314 aa).

An N-terminal signal peptide occupies residues 1–18; it reads MLIQILFLIILTLNCSYS. Residues asparagine 68, asparagine 72, asparagine 106, and asparagine 256 are each glycosylated (N-linked (GlcNAc...) asparagine).

Its subcellular location is the secreted. This is an uncharacterized protein from Caenorhabditis elegans.